The following is a 439-amino-acid chain: GTPase Der (439 aa).

EngA-type G domains lie at 4-169 (AMVS…PQEE) and 177-352 (IKIA…EEYN). Residues 10-17 (GRPNVGKS), 57-61 (DTGGL), 120-123 (NKVD), 183-190 (GKPNVGKS), 230-234 (DTAGI), and 295-298 (NKWD) contribute to the GTP site. The 85-residue stretch at 353-437 (KRITTGLLNN…PIVISTKKRG (85 aa)) folds into the KH-like domain.

This sequence belongs to the TRAFAC class TrmE-Era-EngA-EngB-Septin-like GTPase superfamily. EngA (Der) GTPase family. In terms of assembly, associates with the 50S ribosomal subunit.

In terms of biological role, GTPase that plays an essential role in the late steps of ribosome biogenesis. This chain is GTPase Der, found in Thermoanaerobacter sp. (strain X514).